Consider the following 217-residue polypeptide: High frequency lysogenization protein HflD homolog (217 aa).

The protein belongs to the HflD family.

The protein resides in the cytoplasm. It localises to the cell membrane. In Buchnera aphidicola subsp. Baizongia pistaciae (strain Bp), this protein is High frequency lysogenization protein HflD homolog.